We begin with the raw amino-acid sequence, 133 residues long: Holo-[acyl-carrier-protein] synthase (133 aa).

2 residues coordinate Mg(2+): Asp8 and Glu57.

The protein belongs to the P-Pant transferase superfamily. AcpS family. Requires Mg(2+) as cofactor.

It localises to the cytoplasm. It carries out the reaction apo-[ACP] + CoA = holo-[ACP] + adenosine 3',5'-bisphosphate + H(+). Functionally, transfers the 4'-phosphopantetheine moiety from coenzyme A to a Ser of acyl-carrier-protein. This is Holo-[acyl-carrier-protein] synthase from Bartonella quintana (strain Toulouse) (Rochalimaea quintana).